The chain runs to 356 residues: S-adenosylmethionine:tRNA ribosyltransferase-isomerase (356 aa).

This sequence belongs to the QueA family. Monomer.

The protein localises to the cytoplasm. The catalysed reaction is 7-aminomethyl-7-carbaguanosine(34) in tRNA + S-adenosyl-L-methionine = epoxyqueuosine(34) in tRNA + adenine + L-methionine + 2 H(+). The protein operates within tRNA modification; tRNA-queuosine biosynthesis. Transfers and isomerizes the ribose moiety from AdoMet to the 7-aminomethyl group of 7-deazaguanine (preQ1-tRNA) to give epoxyqueuosine (oQ-tRNA). This is S-adenosylmethionine:tRNA ribosyltransferase-isomerase from Escherichia coli O8 (strain IAI1).